A 755-amino-acid chain; its full sequence is Photosystem I P700 chlorophyll a apoprotein A1 (755 aa).

Helical transmembrane passes span 72 to 95, 158 to 181, 197 to 221, 297 to 315, 352 to 375, 391 to 417, 439 to 461, and 536 to 554; these read IFSA…FHGA, LYCT…FHYH, LNHH…HVSL, TAHH…GHMY, WHAQ…QHMY, LSLF…IFMV, AIIS…LYVH, and FMVH…LILL. Residues cysteine 578 and cysteine 587 each coordinate [4Fe-4S] cluster. 2 consecutive transmembrane segments (helical) span residues 594 to 615 and 669 to 691; these read HVFL…HFSW and LSAY…MFLF. Histidine 680 is a chlorophyll a' binding site. Methionine 688 and tyrosine 696 together coordinate chlorophyll a. Residue tryptophan 697 coordinates phylloquinone. Residues 729 to 749 traverse the membrane as a helical segment; that stretch reads AVGVAHYLLGGIATTWAFFLA.

The protein belongs to the PsaA/PsaB family. As to quaternary structure, the PsaA/B heterodimer binds the P700 chlorophyll special pair and subsequent electron acceptors. PSI consists of a core antenna complex that captures photons, and an electron transfer chain that converts photonic excitation into a charge separation. The cyanobacterial PSI reaction center is composed of one copy each of PsaA,B,C,D,E,F,I,J,K,L,M and X, and forms trimeric complexes. The cofactor is PSI electron transfer chain: 5 chlorophyll a, 1 chlorophyll a', 2 phylloquinones and 3 4Fe-4S clusters. PSI core antenna: 90 chlorophyll a, 22 carotenoids, 3 phospholipids and 1 galactolipid. P700 is a chlorophyll a/chlorophyll a' dimer, A0 is one or more chlorophyll a, A1 is one or both phylloquinones and FX is a shared 4Fe-4S iron-sulfur center..

It is found in the cellular thylakoid membrane. The enzyme catalyses reduced [plastocyanin] + hnu + oxidized [2Fe-2S]-[ferredoxin] = oxidized [plastocyanin] + reduced [2Fe-2S]-[ferredoxin]. PsaA and PsaB bind P700, the primary electron donor of photosystem I (PSI), as well as the electron acceptors A0, A1 and FX. PSI is a plastocyanin/cytochrome c6-ferredoxin oxidoreductase, converting photonic excitation into a charge separation, which transfers an electron from the donor P700 chlorophyll pair to the spectroscopically characterized acceptors A0, A1, FX, FA and FB in turn. Oxidized P700 is reduced on the lumenal side of the thylakoid membrane by plastocyanin or cytochrome c6. This is Photosystem I P700 chlorophyll a apoprotein A1 from Thermostichus vulcanus (Synechococcus vulcanus).